A 347-amino-acid polypeptide reads, in one-letter code: Ribosomal RNA small subunit methyltransferase C (347 aa).

This sequence belongs to the methyltransferase superfamily. RsmC family. As to quaternary structure, monomer.

The protein localises to the cytoplasm. It carries out the reaction guanosine(1207) in 16S rRNA + S-adenosyl-L-methionine = N(2)-methylguanosine(1207) in 16S rRNA + S-adenosyl-L-homocysteine + H(+). Its function is as follows. Specifically methylates the guanine in position 1207 of 16S rRNA in the 30S particle. The chain is Ribosomal RNA small subunit methyltransferase C from Shewanella baltica (strain OS195).